The sequence spans 237 residues: tRNA (guanine-N(7)-)-methyltransferase (237 aa).

Residues Glu-67, Glu-92, Asp-119, and Asp-141 each contribute to the S-adenosyl-L-methionine site. Residue Asp-141 is part of the active site. Residues Lys-145, Asp-177, and 214 to 217 (TRYE) contribute to the substrate site.

This sequence belongs to the class I-like SAM-binding methyltransferase superfamily. TrmB family.

The catalysed reaction is guanosine(46) in tRNA + S-adenosyl-L-methionine = N(7)-methylguanosine(46) in tRNA + S-adenosyl-L-homocysteine. It participates in tRNA modification; N(7)-methylguanine-tRNA biosynthesis. In terms of biological role, catalyzes the formation of N(7)-methylguanine at position 46 (m7G46) in tRNA. The sequence is that of tRNA (guanine-N(7)-)-methyltransferase from Ruegeria pomeroyi (strain ATCC 700808 / DSM 15171 / DSS-3) (Silicibacter pomeroyi).